A 196-amino-acid polypeptide reads, in one-letter code: Carnitine operon protein CaiE (196 aa).

The interval 173-196 is disordered; sequence TQPLRQMEENRPRLQGTTDVTPKR. Residues 187 to 196 show a composition bias toward polar residues; that stretch reads QGTTDVTPKR.

Belongs to the transferase hexapeptide repeat family.

Its pathway is amine and polyamine metabolism; carnitine metabolism. Overproduction of CaiE stimulates the activity of CaiB and CaiD. This Escherichia coli O139:H28 (strain E24377A / ETEC) protein is Carnitine operon protein CaiE.